Reading from the N-terminus, the 127-residue chain is Large ribosomal subunit protein bL12c (127 aa).

A disordered region spans residues 104–127; sequence GVAKDAAEEAKKQIEDAGGKASLK. Over residues 105-121 the composition is skewed to basic and acidic residues; sequence VAKDAAEEAKKQIEDAG.

Belongs to the bacterial ribosomal protein bL12 family. In terms of assembly, homodimer. Part of the ribosomal stalk of the 50S ribosomal subunit. Forms a multimeric L10(L12)X complex, where L10 forms an elongated spine to which 2 to 4 L12 dimers bind in a sequential fashion. Binds GTP-bound translation factors.

It is found in the plastid. Its subcellular location is the chloroplast. In terms of biological role, forms part of the ribosomal stalk which helps the ribosome interact with GTP-bound translation factors. Is thus essential for accurate translation. In Trieres chinensis (Marine centric diatom), this protein is Large ribosomal subunit protein bL12c.